A 354-amino-acid chain; its full sequence is Uroporphyrinogen decarboxylase (354 aa).

Substrate is bound by residues 25–29 (RQAGR), Phe-44, Asp-75, Tyr-152, Thr-207, and His-330.

Belongs to the uroporphyrinogen decarboxylase family. Homodimer.

Its subcellular location is the cytoplasm. It catalyses the reaction uroporphyrinogen III + 4 H(+) = coproporphyrinogen III + 4 CO2. The protein operates within porphyrin-containing compound metabolism; protoporphyrin-IX biosynthesis; coproporphyrinogen-III from 5-aminolevulinate: step 4/4. Its function is as follows. Catalyzes the decarboxylation of four acetate groups of uroporphyrinogen-III to yield coproporphyrinogen-III. The polypeptide is Uroporphyrinogen decarboxylase (Xylella fastidiosa (strain Temecula1 / ATCC 700964)).